The following is a 164-amino-acid chain: GTP-dependent dephospho-CoA kinase (164 aa).

6 residues coordinate GTP: D40, V41, V42, D59, K61, and E113.

Belongs to the GTP-dependent DPCK family.

The catalysed reaction is 3'-dephospho-CoA + GTP = GDP + CoA + H(+). It participates in cofactor biosynthesis; coenzyme A biosynthesis. In terms of biological role, catalyzes the GTP-dependent phosphorylation of the 3'-hydroxyl group of dephosphocoenzyme A to form coenzyme A (CoA). The protein is GTP-dependent dephospho-CoA kinase of Sulfolobus acidocaldarius (strain ATCC 33909 / DSM 639 / JCM 8929 / NBRC 15157 / NCIMB 11770).